The sequence spans 511 residues: Protein phosphatase 2C 16 (511 aa).

Residues 1-22 (MEEMTPAVAMTLSLAANTMCES) form the signal peptide. A PPM-type phosphatase domain is found at 189–501 (LWGTVSIQGN…DNISIIVIDL (313 aa)). Mn(2+) contacts are provided by Asp243, Gly244, Asp432, and Asp492.

Belongs to the PP2C family. In terms of assembly, interacts with SWI3B (via N-terminus). Interacts with ABA-bounded PYR1, PYL1, PYL2, PYL3, PYL4, PYL5, PYL6, PYL8 and PYL9, and with free PYL2, PYL3, PYL4, PYL10 and PYL13. Mg(2+) is required as a cofactor. Mn(2+) serves as cofactor. As to expression, expressed in seeds, roots, stems, leaves and flowers, especially in meristematic tissues, guard cells, embryo and siliques.

The protein localises to the cytoplasm. The protein resides in the nucleus. The enzyme catalyses O-phospho-L-seryl-[protein] + H2O = L-seryl-[protein] + phosphate. It carries out the reaction O-phospho-L-threonyl-[protein] + H2O = L-threonyl-[protein] + phosphate. Its activity is regulated as follows. Repressed by PYR/PYL/RCAR ABA receptors in an ABA-dependent manner. In terms of biological role, key component and repressor of the abscisic acid (ABA) signaling pathway that regulates numerous ABA responses, such as stomatal closure, seed germination and inhibition of vegetative growth. Confers enhanced sensitivity to drought. The sequence is that of Protein phosphatase 2C 16 (HAB1) from Arabidopsis thaliana (Mouse-ear cress).